A 260-amino-acid chain; its full sequence is Ribose-5-phosphate isomerase A (260 aa).

Substrate contacts are provided by residues 33–36 (TGST), 89–92 (DGAD), and 102–105 (KGGG). The Proton acceptor role is filled by glutamate 111. A substrate-binding site is contributed by lysine 129.

This sequence belongs to the ribose 5-phosphate isomerase family. As to quaternary structure, homodimer.

It carries out the reaction aldehydo-D-ribose 5-phosphate = D-ribulose 5-phosphate. It functions in the pathway carbohydrate degradation; pentose phosphate pathway; D-ribose 5-phosphate from D-ribulose 5-phosphate (non-oxidative stage): step 1/1. Catalyzes the reversible conversion of ribose-5-phosphate to ribulose 5-phosphate. In Dinoroseobacter shibae (strain DSM 16493 / NCIMB 14021 / DFL 12), this protein is Ribose-5-phosphate isomerase A.